Reading from the N-terminus, the 347-residue chain is 8-amino-8-demethylriboflavin N,N-dimethyltransferase (347 aa).

S-adenosyl-L-methionine is bound by residues Asp-209 and 235–237 (GDF).

The protein belongs to the class I-like SAM-binding methyltransferase superfamily. Cation-independent O-methyltransferase family. As to quaternary structure, homodimer.

The enzyme catalyses 8-amino-8-demethylriboflavin + 2 S-adenosyl-L-methionine = roseoflavin + 2 S-adenosyl-L-homocysteine + 2 H(+). The protein operates within antibiotic biosynthesis. In terms of biological role, catalyzes the S-adenosyl methionine-dependent conversion of 8-amino-8-demethyl-D-riboflavin (AF) into 8-methylamino-8-demethyl-D-riboflavin (MAF) and roseoflavin (RoF), the last two steps in the biosynthesis of the antibiotic roseoflavin. The polypeptide is 8-amino-8-demethylriboflavin N,N-dimethyltransferase (Streptomyces davaonensis (strain DSM 101723 / JCM 4913 / KCC S-0913 / 768)).